A 191-amino-acid polypeptide reads, in one-letter code: Probable DNA-directed RNA polymerase subunit delta (191 aa).

The HTH HARE-type domain maps to 14–83 (LSMIEVARAI…GDNKWGLRSW (70 aa)). Acidic residues-rich tracts occupy residues 119–133 (EDAI…EDEN) and 143–191 (YDND…ETND). The tract at residues 119–191 (EDAIDYNDDD…DDDYEDETND (73 aa)) is disordered.

It belongs to the RpoE family. In terms of assembly, RNAP is composed of a core of 2 alpha, a beta and a beta' subunits. The core is associated with a delta subunit and one of several sigma factors.

In terms of biological role, participates in both the initiation and recycling phases of transcription. In the presence of the delta subunit, RNAP displays an increased specificity of transcription, a decreased affinity for nucleic acids, and an increased efficiency of RNA synthesis because of enhanced recycling. This Streptococcus thermophilus (strain ATCC BAA-491 / LMD-9) protein is Probable DNA-directed RNA polymerase subunit delta.